The following is a 429-amino-acid chain: Glutamate-1-semialdehyde 2,1-aminomutase (429 aa).

Lysine 270 is subject to N6-(pyridoxal phosphate)lysine.

The protein belongs to the class-III pyridoxal-phosphate-dependent aminotransferase family. HemL subfamily. In terms of assembly, homodimer. The cofactor is pyridoxal 5'-phosphate.

The protein localises to the cytoplasm. The catalysed reaction is (S)-4-amino-5-oxopentanoate = 5-aminolevulinate. The protein operates within porphyrin-containing compound metabolism; protoporphyrin-IX biosynthesis; 5-aminolevulinate from L-glutamyl-tRNA(Glu): step 2/2. This Cupriavidus pinatubonensis (strain JMP 134 / LMG 1197) (Cupriavidus necator (strain JMP 134)) protein is Glutamate-1-semialdehyde 2,1-aminomutase.